A 264-amino-acid chain; its full sequence is Small ribosomal subunit protein uS2 (264 aa).

The disordered stretch occupies residues 225-264 (GKKAREERQLAAAKDAAGDAKPEAEEAPVAAEAEEAPAAE).

The protein belongs to the universal ribosomal protein uS2 family.

This chain is Small ribosomal subunit protein uS2, found in Corynebacterium glutamicum (strain R).